The sequence spans 338 residues: Anthranilate phosphoribosyltransferase (338 aa).

5-phospho-alpha-D-ribose 1-diphosphate is bound by residues Gly-81, 84 to 85 (GD), Thr-89, 91 to 94 (NIST), 109 to 117 (KHGNRNLSS), and Ala-121. Gly-81 contributes to the anthranilate binding site. Residue Ser-93 participates in Mg(2+) binding. Asn-112 is a binding site for anthranilate. Arg-167 contributes to the anthranilate binding site. 2 residues coordinate Mg(2+): Asp-226 and Glu-227.

Belongs to the anthranilate phosphoribosyltransferase family. As to quaternary structure, homodimer. The cofactor is Mg(2+).

The enzyme catalyses N-(5-phospho-beta-D-ribosyl)anthranilate + diphosphate = 5-phospho-alpha-D-ribose 1-diphosphate + anthranilate. Its pathway is amino-acid biosynthesis; L-tryptophan biosynthesis; L-tryptophan from chorismate: step 2/5. Its function is as follows. Catalyzes the transfer of the phosphoribosyl group of 5-phosphorylribose-1-pyrophosphate (PRPP) to anthranilate to yield N-(5'-phosphoribosyl)-anthranilate (PRA). The polypeptide is Anthranilate phosphoribosyltransferase (Cereibacter sphaeroides (strain ATCC 17023 / DSM 158 / JCM 6121 / CCUG 31486 / LMG 2827 / NBRC 12203 / NCIMB 8253 / ATH 2.4.1.) (Rhodobacter sphaeroides)).